We begin with the raw amino-acid sequence, 310 residues long: Methionyl-tRNA formyltransferase (310 aa).

109–112 (SLLP) lines the (6S)-5,6,7,8-tetrahydrofolate pocket.

The protein belongs to the Fmt family.

It catalyses the reaction L-methionyl-tRNA(fMet) + (6R)-10-formyltetrahydrofolate = N-formyl-L-methionyl-tRNA(fMet) + (6S)-5,6,7,8-tetrahydrofolate + H(+). Its function is as follows. Attaches a formyl group to the free amino group of methionyl-tRNA(fMet). The formyl group appears to play a dual role in the initiator identity of N-formylmethionyl-tRNA by promoting its recognition by IF2 and preventing the misappropriation of this tRNA by the elongation apparatus. This Pseudomonas paraeruginosa (strain DSM 24068 / PA7) (Pseudomonas aeruginosa (strain PA7)) protein is Methionyl-tRNA formyltransferase.